Consider the following 193-residue polypeptide: Naphthalene 1,2-dioxygenase system, small oxygenase component (193 aa).

This sequence belongs to the bacterial ring-hydroxylating dioxygenase beta subunit family. As to quaternary structure, the naphthalene dioxygenase (NDO) multicomponent enzyme system is composed of an electron transfer component and a dioxygenase component (iron sulfur protein (ISP)). The electron transfer component is composed of a ferredoxin reductase (NdoR) and a ferredoxin (NdoA), and the dioxygenase component is formed of a heterohexamer (trimer of heterodimers) of three large alpha subunits (NdoB) and three small beta subunits (NdoC).

The protein operates within aromatic compound metabolism; naphthalene degradation. Component of the naphthalene dioxygenase (NDO) multicomponent enzyme system which catalyzes the incorporation of both atoms of molecular oxygen into naphthalene to form cis-(1R,2S)-dihydroxy-1,2-dihydronaphthalene. The beta subunit seems to have a structural role in the holoenzyme. This is Naphthalene 1,2-dioxygenase system, small oxygenase component from Pseudomonas aeruginosa.